The primary structure comprises 435 residues: tRNA(Ile)-lysidine synthase (435 aa).

Ser23–Ser28 contributes to the ATP binding site.

Belongs to the tRNA(Ile)-lysidine synthase family.

Its subcellular location is the cytoplasm. The enzyme catalyses cytidine(34) in tRNA(Ile2) + L-lysine + ATP = lysidine(34) in tRNA(Ile2) + AMP + diphosphate + H(+). Functionally, ligates lysine onto the cytidine present at position 34 of the AUA codon-specific tRNA(Ile) that contains the anticodon CAU, in an ATP-dependent manner. Cytidine is converted to lysidine, thus changing the amino acid specificity of the tRNA from methionine to isoleucine. This chain is tRNA(Ile)-lysidine synthase, found in Xanthomonas campestris pv. campestris (strain 8004).